Here is a 440-residue protein sequence, read N- to C-terminus: Tyrosine--tRNA ligase (440 aa).

Tyr46 provides a ligand contact to L-tyrosine. The 'HIGH' region motif lies at 51–60 (PTAASLHIGN). The L-tyrosine site is built by Tyr181 and Gln185. The 'KMSKS' region signature appears at 241 to 245 (KFGKS). Lys244 contacts ATP. The S4 RNA-binding domain maps to 373–439 (DRVIDAAQAA…GKKALGAVEN (67 aa)).

The protein belongs to the class-I aminoacyl-tRNA synthetase family. TyrS type 1 subfamily. In terms of assembly, homodimer.

It is found in the cytoplasm. The catalysed reaction is tRNA(Tyr) + L-tyrosine + ATP = L-tyrosyl-tRNA(Tyr) + AMP + diphosphate + H(+). In terms of biological role, catalyzes the attachment of tyrosine to tRNA(Tyr) in a two-step reaction: tyrosine is first activated by ATP to form Tyr-AMP and then transferred to the acceptor end of tRNA(Tyr). This Bifidobacterium longum (strain NCC 2705) protein is Tyrosine--tRNA ligase.